A 469-amino-acid chain; its full sequence is Glutamine synthetase (469 aa).

Positions 14–99 (NDVKFVDLRF…FCDILDPVSG (86 aa)) constitute a GS beta-grasp domain. Residues 106–469 (PRGTAKKAEA…PVEFDMYYSV (364 aa)) form the GS catalytic domain. Residues E131 and E133 each contribute to the Mg(2+) site. ATP is bound at residue E209. Mg(2+)-binding residues include E214 and E221. L-glutamate-binding positions include 265 to 266 (NG) and G266. Residue H270 participates in Mg(2+) binding. Residues 272–274 (HLS) and S274 contribute to the ATP site. Residues R322, E328, and R340 each contribute to the L-glutamate site. 3 residues coordinate ATP: R340, R345, and K353. Mg(2+) is bound at residue E358. Residue R360 participates in L-glutamate binding. Residue Y398 is modified to O-AMP-tyrosine.

This sequence belongs to the glutamine synthetase family. Oligomer of 12 subunits arranged in the form of two hexameric ring. Mg(2+) is required as a cofactor.

The protein localises to the cytoplasm. It carries out the reaction L-glutamate + NH4(+) + ATP = L-glutamine + ADP + phosphate + H(+). With respect to regulation, the activity of this enzyme could be controlled by adenylation under conditions of abundant glutamine. In terms of biological role, catalyzes the ATP-dependent biosynthesis of glutamine from glutamate and ammonia. This Rhizobium meliloti (strain 1021) (Ensifer meliloti) protein is Glutamine synthetase.